We begin with the raw amino-acid sequence, 181 residues long: UPF0177 protein YbdI (181 aa).

The next 5 helical transmembrane spans lie at 10–30, 41–61, 81–101, 114–134, and 161–181; these read ILFL…GVFA, LLWL…AHYL, FVDS…IAPI, FFSH…LIHT, and SDSI…HIII.

This sequence belongs to the UPF0177 family.

The protein resides in the cell membrane. The protein is UPF0177 protein YbdI (ybdI) of Lactococcus lactis subsp. lactis (strain IL1403) (Streptococcus lactis).